A 208-amino-acid polypeptide reads, in one-letter code: MYDPMATAMNLVPMVVEQTSRGERAFDIFSRLLKERIIFLTGPVEDGMASLICAQLLFLESENPKKEIAMYINSPGGVVTAGLAIYDTMQYIKSPVSTVCMGMAASMGSLLLQAGAPGHRIALPNARIMVHQPSGGFRGQASDIERHAEDIIKTKRRLNEIYVKHTGRTYEEVEKTLDRDHFMSAEEAKAWGLIDHINESRDEADEKA.

The Nucleophile role is filled by Ser-106. Residue His-131 is part of the active site.

Belongs to the peptidase S14 family. In terms of assembly, fourteen ClpP subunits assemble into 2 heptameric rings which stack back to back to give a disk-like structure with a central cavity, resembling the structure of eukaryotic proteasomes.

It is found in the cytoplasm. It carries out the reaction Hydrolysis of proteins to small peptides in the presence of ATP and magnesium. alpha-casein is the usual test substrate. In the absence of ATP, only oligopeptides shorter than five residues are hydrolyzed (such as succinyl-Leu-Tyr-|-NHMec, and Leu-Tyr-Leu-|-Tyr-Trp, in which cleavage of the -Tyr-|-Leu- and -Tyr-|-Trp bonds also occurs).. Its function is as follows. Cleaves peptides in various proteins in a process that requires ATP hydrolysis. Has a chymotrypsin-like activity. Plays a major role in the degradation of misfolded proteins. This chain is ATP-dependent Clp protease proteolytic subunit, found in Caulobacter sp. (strain K31).